We begin with the raw amino-acid sequence, 139 residues long: Large ribosomal subunit protein uL16c (139 aa).

It belongs to the universal ribosomal protein uL16 family. Part of the 50S ribosomal subunit.

The protein localises to the plastid. The protein resides in the chloroplast. The chain is Large ribosomal subunit protein uL16c from Cicer arietinum (Chickpea).